The primary structure comprises 121 residues: uncharacterized protein (121 aa).

The interval 101–121 (TVVKKEDVRESPVDTFMENAT) is disordered. Residues 102-112 (VVKKEDVRESP) are compositionally biased toward basic and acidic residues.

This is an uncharacterized protein from Schizosaccharomyces pombe (strain 972 / ATCC 24843) (Fission yeast).